Reading from the N-terminus, the 163-residue chain is Cytochrome b6-f complex subunit 4 (163 aa).

3 consecutive transmembrane segments (helical) span residues 36 to 56 (LLYIFPVVILGTIACNVGLAV), 95 to 115 (LLGVLLMVSVPLGLLTVPFLE), and 131 to 151 (TVFLIGTAVALWLGIGATLPI).

This sequence belongs to the cytochrome b family. PetD subfamily. As to quaternary structure, the 4 large subunits of the cytochrome b6-f complex are cytochrome b6, subunit IV (17 kDa polypeptide, petD), cytochrome f and the Rieske protein, while the 4 small subunits are petG, petL, petM and petN. The complex functions as a dimer.

It is found in the plastid. It localises to the chloroplast thylakoid membrane. In terms of biological role, component of the cytochrome b6-f complex, which mediates electron transfer between photosystem II (PSII) and photosystem I (PSI), cyclic electron flow around PSI, and state transitions. This Phalaenopsis aphrodite subsp. formosana (Moth orchid) protein is Cytochrome b6-f complex subunit 4.